We begin with the raw amino-acid sequence, 87 residues long: UPF0250 protein BCc_307 (87 aa).

This sequence belongs to the UPF0250 family.

The chain is UPF0250 protein BCc_307 from Buchnera aphidicola subsp. Cinara cedri (strain Cc).